We begin with the raw amino-acid sequence, 301 residues long: Glycine--tRNA ligase alpha subunit (301 aa).

The protein belongs to the class-II aminoacyl-tRNA synthetase family. In terms of assembly, tetramer of two alpha and two beta subunits.

The protein localises to the cytoplasm. It carries out the reaction tRNA(Gly) + glycine + ATP = glycyl-tRNA(Gly) + AMP + diphosphate. This Nitrosospira multiformis (strain ATCC 25196 / NCIMB 11849 / C 71) protein is Glycine--tRNA ligase alpha subunit.